The sequence spans 155 residues: V-type proton ATPase 16 kDa proteolipid subunit c (155 aa).

Topologically, residues methionine 1–tyrosine 10 are lumenal. The helical transmembrane segment at alanine 11 to glycine 33 threads the bilayer. The Cytoplasmic portion of the chain corresponds to threonine 34 to serine 55. Residues isoleucine 56–isoleucine 76 traverse the membrane as a helical segment. Residues alanine 77–glutamine 92 are Lumenal-facing. The helical transmembrane segment at leucine 93–glycine 114 threads the bilayer. The Cytoplasmic segment spans residues aspartate 115–methionine 131. A helical transmembrane segment spans residues isoleucine 132–leucine 152. At serine 153–lysine 155 the chain is on the lumenal side.

It belongs to the V-ATPase proteolipid subunit family. As to quaternary structure, V-ATPase is a heteromultimeric enzyme made up of two complexes: the ATP-hydrolytic V1 complex and the proton translocation V0 complex. The V1 complex consists of three catalytic AB heterodimers that form a heterohexamer, three peripheral stalks each consisting of EG heterodimers, one central rotor including subunits D and F, and the regulatory subunits C and H. The proton translocation complex V0 consists of the proton transport subunit a, a ring of proteolipid subunits c9c'', rotary subunit d, subunits e and f, and the accessory subunits ATP6AP1/Ac45 and ATP6AP2/PRR. Interacts with the V0 complex V-ATPase subunit a4 ATP6V0A4. Interacts with LASS2. Interacts with RNF182; this interaction leads to ubiquitination and degradation via the proteasome pathway. Ubiquitinated by RNF182, leading to its degradation via the ubiquitin-proteasome pathway. Expressed in brain (at protein level).

It localises to the cytoplasmic vesicle. It is found in the clathrin-coated vesicle membrane. Its subcellular location is the secretory vesicle. The protein localises to the synaptic vesicle membrane. Proton-conducting pore forming subunit of the V0 complex of vacuolar(H+)-ATPase (V-ATPase), a multisubunit enzyme composed of a peripheral complex (V1) that hydrolyzes ATP and a membrane integral complex (V0) that translocates protons. V-ATPase is responsible for acidifying and maintaining the pH of intracellular compartments and in some cell types, is targeted to the plasma membrane, where it is responsible for acidifying the extracellular environment. This is V-type proton ATPase 16 kDa proteolipid subunit c (ATP6V0C) from Bos taurus (Bovine).